Here is a 384-residue protein sequence, read N- to C-terminus: Organic solute transporter alpha-like protein 1 (384 aa).

Residues 1–38 (MEIVKTIIPHNRSYIEPPIPSATEWLANMSVMHVSCLT) are Extracellular-facing. N-linked (GlcNAc...) asparagine glycans are attached at residues asparagine 11 and asparagine 28. The chain crosses the membrane as a helical span at residues 39-59 (IACVFVAITFLSSFFHLFFVL). Residues 60–70 (KYVSNERIRND) lie on the Cytoplasmic side of the membrane. The chain crosses the membrane as a helical span at residues 71–91 (MYALIFMFPITTFASLVGMFI). At 92–93 (PR) the chain is on the extracellular side. A helical transmembrane segment spans residues 94-114 (AAIFLYAVSLVYFMFTLFIMV). Topologically, residues 115-165 (TLLFNIFGGRQEMSAYLLQRNIRVNFTVPPLCFFKFLPTVESTDQNLRRIE) are cytoplasmic. The helical transmembrane segment at 166-186 (WLVFQTPIIRTLLELVSVVVS) threads the bilayer. Residues 187–202 (MEQEGRRESVWFVFSQ) are Extracellular-facing. Residues 203 to 223 (LMALLSMCIAFYGCYVMVPLG) traverse the membrane as a helical segment. The Cytoplasmic segment spans residues 224 to 240 (REKHAPYRFDFLFRTCD). Residues 241 to 261 (IAQCIYTIQKFVFEFAAAVGL) traverse the membrane as a helical segment. The Extracellular portion of the chain corresponds to 262-273 (ITSDRYLPAAAK). The chain crosses the membrane as a helical span at residues 274 to 294 (ALWWASFMCTWEMMLLSALCS). The Cytoplasmic portion of the chain corresponds to 295 to 384 (YCLRPAKCKF…FDSLSQIQGQ (90 aa)).

Belongs to the OST-alpha family.

Its subcellular location is the cell membrane. Functionally, probable transporter. In Caenorhabditis elegans, this protein is Organic solute transporter alpha-like protein 1 (osta-1).